The primary structure comprises 165 residues: Protein SprT (165 aa).

The SprT-like domain occupies 20–163; it reads EKLAQANLKL…RCVHCGEQLV (144 aa). Position 78 (H78) interacts with Zn(2+). The active site involves E79. A Zn(2+)-binding site is contributed by H82.

It belongs to the SprT family. Requires Zn(2+) as cofactor.

The protein localises to the cytoplasm. The polypeptide is Protein SprT (Shigella sonnei (strain Ss046)).